The sequence spans 431 residues: Glutamate-1-semialdehyde 2,1-aminomutase (431 aa).

Lys-269 carries the post-translational modification N6-(pyridoxal phosphate)lysine.

It belongs to the class-III pyridoxal-phosphate-dependent aminotransferase family. HemL subfamily. Homodimer. The cofactor is pyridoxal 5'-phosphate.

Its subcellular location is the cytoplasm. The catalysed reaction is (S)-4-amino-5-oxopentanoate = 5-aminolevulinate. The protein operates within porphyrin-containing compound metabolism; protoporphyrin-IX biosynthesis; 5-aminolevulinate from L-glutamyl-tRNA(Glu): step 2/2. It functions in the pathway porphyrin-containing compound metabolism; chlorophyll biosynthesis. The chain is Glutamate-1-semialdehyde 2,1-aminomutase from Chlorobaculum parvum (strain DSM 263 / NCIMB 8327) (Chlorobium vibrioforme subsp. thiosulfatophilum).